We begin with the raw amino-acid sequence, 412 residues long: Alanyl-tRNA editing protein Aarsd1-A (412 aa).

Positions 108, 112, 208, and 212 each coordinate Zn(2+).

It belongs to the class-II aminoacyl-tRNA synthetase family. Alax-L subfamily. The cofactor is Zn(2+).

The protein resides in the cytoplasm. Functionally, functions in trans to edit the amino acid moiety from incorrectly charged tRNA(Ala). The polypeptide is Alanyl-tRNA editing protein Aarsd1-A (aarsd1-a) (Xenopus laevis (African clawed frog)).